The following is a 194-amino-acid chain: Large ribosomal subunit protein bL9 (194 aa).

Basic and acidic residues predominate over residues 156–167 (RGEDISSRREDQ). Residues 156–194 (RGEDISSRREDQDAAAEAIAAAGEFFDPDAQQDEEPEQQ) are disordered. A compositionally biased stretch (acidic residues) spans 181–194 (FDPDAQQDEEPEQQ).

Belongs to the bacterial ribosomal protein bL9 family.

In terms of biological role, binds to the 23S rRNA. This chain is Large ribosomal subunit protein bL9, found in Rhodopseudomonas palustris (strain BisB5).